The following is a 425-amino-acid chain: Mothers against decapentaplegic homolog 3 (425 aa).

S2 carries the N-acetylserine modification. The residue at position 8 (T8) is a Phosphothreonine; by CDK2 and CDK4. The MH1 domain occupies P10–P136. Residue K33 forms a Glycyl lysine isopeptide (Lys-Gly) (interchain with G-Cter in ubiquitin) linkage. C64 provides a ligand contact to Zn(2+). K81 participates in a covalent cross-link: Glycyl lysine isopeptide (Lys-Gly) (interchain with G-Cter in ubiquitin). Zn(2+) contacts are provided by C109, C121, and H126. The interval P137–F231 is linker. Positions N165 to P177 are enriched in polar residues. Residues N165–S208 are disordered. Phosphothreonine; by CDK2, CDK4 and MAPK is present on T179. Position 204 is a phosphoserine; by GSK3 and MAPK (S204). Position 208 is a phosphoserine; by MAPK (S208). Phosphoserine; by CDK2 and CDK4 is present on S213. One can recognise an MH2 domain in the interval W232–S425. Residues L271 to Y324 form a sufficient for interaction with XPO4 region. The residue at position 378 (K378) is an N6-acetyllysine. Phosphoserine is present on S416. S418 carries the post-translational modification Phosphoserine; by CK1. Phosphoserine; by TGFBR1 is present on residues S422, S423, and S425.

This sequence belongs to the dwarfin/SMAD family. In terms of assembly, monomer; in the absence of TGF-beta. Homooligomer; in the presence of TGF-beta. Heterotrimer; forms a heterotrimer in the presence of TGF-beta consisting of two molecules of C-terminally phosphorylated SMAD2 or SMAD3 and one of SMAD4 to form the transcriptionally active SMAD2/SMAD3-SMAD4 complex. Part of a complex consisting of MAGI2/ARIP1, ACVR2A, ACVR1B and SMAD3. Forms a complex with SMAD2 and TRIM33 upon addition of TGF-beta. Found in a complex composed of SMAD3, RAN and XPO4; within the complex interacts directly with XPO4. Component of the multimeric complex SMAD3/SMAD4/JUN/FOS which forms at the AP1 promoter site; required for synergistic transcriptional activity in response to TGF-beta. Part of a ternary complex composed of SMAD3, ITCH/AIP4 and NEDD9/HEF1; within the complex NEDD9/HEF1 interacts (via N-terminus) with ITCH/AIP4; the complex mediates ubiquitination and proteasomal degradation of NEDD9/HEF1. Interacts with NEDD9; the interaction promotes NEDD9 ubiquitination and proteasomal degradation. Interacts (via an N-terminal domain) with JUN (via its basic DNA binding and leucine zipper domains); this interaction is essential for DNA binding and cooperative transcriptional activity in response to TGF-beta. Identified in a complex that contains at least ZNF451, SMAD2, SMAD3 and SMAD4. Interacts with PPM1A; the interaction dephosphorylates SMAD3 in the C-terminal SXS motif leading to disruption of the SMAD2/3-SMAD4 complex, nuclear export and termination of TGF-beta signaling. Interacts (via MH2 domain) with ZMIZ1 (via SP-RING-type domain); in the TGF-beta signaling pathway increases the activity of the SMAD3/SMAD4 transcriptional complex. Interacts (when phosphorylated) with RNF111; RNF111 acts as an enhancer of the transcriptional responses by mediating ubiquitination and degradation of SMAD3 inhibitors. Interacts (dephosphorylated form via the MH1 and MH2 domains) with RANBP3 (via its C-terminal R domain); the interaction results in the export of dephosphorylated SMAD3 out of the nucleus and termination of the TGF-beta signaling. Interacts (via MH2 domain) with LEMD3; the interaction represses SMAD3 transcriptional activity through preventing the formation of the heteromeric complex with SMAD4 and translocation to the nucleus. Interacts (via the linker region) with EP300 (C-terminal); the interaction promotes SMAD3 acetylation and is enhanced by TGF-beta phosphorylation in the C-terminal of SMAD3. This interaction can be blocked by competitive binding of adenovirus oncoprotein E1A to the same C-terminal site on EP300, which then results in partially inhibited SMAD3/SMAD4 transcriptional activity. Interacts with TGFBR1. Interacts with TGFB1I1. Interacts with PRDM16. Interacts with SNW1. Interacts (via MH2 domain) with ZFYVE9. Interacts with HDAC1. Interacts with TGIF2. Interacts with SKOR1. Interacts with SKOR2. Interacts with DACH1; the interaction inhibits the TGF-beta signaling. Interacts with RBPMS. Interacts (via MH2 domain) with MECOM. Interacts with WWTR1 (via its coiled-coil domain). Interacts with SKI; the interaction represses SMAD3 transcriptional activity. Interacts with MEN1. Interacts with IL1F7. Interaction with CSNK1G2. Interacts with PDPK1 (via PH domain). Interacts with DAB2; the interactions are enhanced upon TGF-beta stimulation. Interacts with USP15. Interacts with PPP5C; the interaction decreases SMAD3 phosphorylation and protein levels. Interacts with LDLRAD4 (via the SMAD interaction motif). Interacts with PMEPA1. Interacts with ZNF451. Interacts with ZFHX3. Interacts weakly with ZNF8. Interacts with STUB1, HSPA1A, HSPA1B, HSP90AA1 and HSP90AB1. Interacts with YAP1 (when phosphorylated at 'Ser-55'). Interacts with MAGI2/ARIP1. Interacts (via MH2 domain) with CITED2 (via C-terminus). Interacts with HGS. Interacts with WWP1. Interacts with TTRAP. Interacts with FOXL2. Interacts with PML. Interacts with NEDD4L; the interaction requires TGF-beta stimulation. Interacts with ZC3H3. Interacts with TGIF. Interacts with CREBBP. Interacts with ATF2. Interacts with NEDD9; the interaction is inhibited by oxidation of NEDD9. Interacts with MTMR4; negatively regulates TGF-beta signaling through SMAD3 dephosphorylation and retention in endosomes. Phosphorylated on serine and threonine residues. Enhanced phosphorylation in the linker region on Thr-179, Ser-204 and Ser-208 on EGF and TGF-beta treatment. Ser-208 is the main site of MAPK-mediated phosphorylation. CDK-mediated phosphorylation occurs in a cell-cycle dependent manner and inhibits both the transcriptional activity and antiproliferative functions of SMAD3. This phosphorylation is inhibited by flavopiridol. Maximum phosphorylation at the G(1)/S junction. Also phosphorylated on serine residues in the C-terminal SXS motif by TGFBR1 and ACVR1. TGFBR1-mediated phosphorylation at these C-terminal sites is required for interaction with SMAD4, nuclear location and transactivational activity, and appears to be a prerequisite for the TGF-beta mediated phosphorylation in the linker region. Dephosphorylated in the C-terminal SXS motif by PPM1A. This dephosphorylation disrupts the interaction with SMAD4, promotes nuclear export and terminates TGF-beta-mediated signaling. Phosphorylation at Ser-418 by CSNK1G2/CK1 promotes ligand-dependent ubiquitination and subsequent proteasome degradation, thus inhibiting SMAD3-mediated TGF-beta responses. Phosphorylated by PDPK1. Post-translationally, acetylation in the nucleus by EP300 in the MH2 domain regulates positively its transcriptional activity and is enhanced by TGF-beta. In terms of processing, poly-ADP-ribosylated by PARP1 and PARP2. ADP-ribosylation negatively regulates SMAD3 transcriptional responses during the course of TGF-beta signaling. Ubiquitinated. Monoubiquitinated, leading to prevent DNA-binding. Deubiquitination by USP15 alleviates inhibition and promotes activation of TGF-beta target genes. Ubiquitinated by RNF111, leading to its degradation: only SMAD3 proteins that are 'in use' are targeted by RNF111, RNF111 playing a key role in activating SMAD3 and regulating its turnover. Undergoes STUB1-mediated ubiquitination and degradation. In terms of tissue distribution, highly expressed in the brain and ovary. Detected in the pyramidal cells of the hippocampus, granule cells of the dentate gyrus, granular cells of the cerebral cortex and the granulosa cells of the ovary.

The protein resides in the cytoplasm. The protein localises to the nucleus. Its function is as follows. Receptor-regulated SMAD (R-SMAD) that is an intracellular signal transducer and transcriptional modulator activated by TGF-beta (transforming growth factor) and activin type 1 receptor kinases. Binds the TRE element in the promoter region of many genes that are regulated by TGF-beta and, on formation of the SMAD3/SMAD4 complex, activates transcription. Also can form a SMAD3/SMAD4/JUN/FOS complex at the AP-1/SMAD site to regulate TGF-beta-mediated transcription. Has an inhibitory effect on wound healing probably by modulating both growth and migration of primary keratinocytes and by altering the TGF-mediated chemotaxis of monocytes. This effect on wound healing appears to be hormone-sensitive. Regulator of chondrogenesis and osteogenesis and inhibits early healing of bone fractures. Positively regulates PDPK1 kinase activity by stimulating its dissociation from the 14-3-3 protein YWHAQ which acts as a negative regulator. The protein is Mothers against decapentaplegic homolog 3 (SMAD3) of Sus scrofa (Pig).